The following is a 161-amino-acid chain: Extracellular giant hemoglobin major globin subunit B1 (161 aa).

Positions 1–16 (MTILVLFLSCAALASA) are cleaved as a signal peptide. Positions 18-161 (CCSRGDAEVV…YIAAGIGAGL (144 aa)) constitute a Globin domain. An intrachain disulfide couples C19 to C149. H112 is a binding site for heme b.

It belongs to the globin family. In terms of assembly, the 400 kDa hemoglobin consists of a spherical 24-mer arranged as a double layer of dome-shaped dodecamers. Each dodecamer is composed of the 3-fold trimer of the tetramer A1-A2-B1-B2 having one intra-tetramer (A1-B2) disulfide bond and one inter-tetramer (B1-B2) disulfide bond per tetramer.

It is found in the secreted. In terms of biological role, the extracellular giant hemoglobin is able to bind and transport oxygen and sulfide simultaneously and reversibly at two different sites. The chain is Extracellular giant hemoglobin major globin subunit B1 (ghbB1) from Oligobrachia mashikoi (Beard worm).